The primary structure comprises 201 residues: Holliday junction branch migration complex subunit RuvA (201 aa).

The domain I stretch occupies residues 1 to 61; that stretch reads MIEFVKGTID…EDAFSLYGFS (61 aa). A domain II region spans residues 62–140; sequence TREEKALFTK…DVVPEMIDNL (79 aa). The segment at 141 to 150 is flexible linker; that stretch reads FNHEARIEKQ. Positions 151-201 are domain III; that stretch reads EAETALDEALEALRVLGYAEKEIKKVLPHLKEETALSTDQYVKKALQKLLK.

This sequence belongs to the RuvA family. Homotetramer. Forms an RuvA(8)-RuvB(12)-Holliday junction (HJ) complex. HJ DNA is sandwiched between 2 RuvA tetramers; dsDNA enters through RuvA and exits via RuvB. An RuvB hexamer assembles on each DNA strand where it exits the tetramer. Each RuvB hexamer is contacted by two RuvA subunits (via domain III) on 2 adjacent RuvB subunits; this complex drives branch migration. In the full resolvosome a probable DNA-RuvA(4)-RuvB(12)-RuvC(2) complex forms which resolves the HJ.

The protein resides in the cytoplasm. In terms of biological role, the RuvA-RuvB-RuvC complex processes Holliday junction (HJ) DNA during genetic recombination and DNA repair, while the RuvA-RuvB complex plays an important role in the rescue of blocked DNA replication forks via replication fork reversal (RFR). RuvA specifically binds to HJ cruciform DNA, conferring on it an open structure. The RuvB hexamer acts as an ATP-dependent pump, pulling dsDNA into and through the RuvAB complex. HJ branch migration allows RuvC to scan DNA until it finds its consensus sequence, where it cleaves and resolves the cruciform DNA. In Bacillus velezensis (strain DSM 23117 / BGSC 10A6 / LMG 26770 / FZB42) (Bacillus amyloliquefaciens subsp. plantarum), this protein is Holliday junction branch migration complex subunit RuvA.